The sequence spans 746 residues: MNGEGISDGLSAERKVEIRVRKNGRKDKVIVEKSAAQGLPEGWIKKLEITNRSGRKTRRDPFFIDPKSEYIFQSFKDASRYVETGNIGHYARKLKESDIEDDDSGNGKTVLRLEYVDKRSADDVLEKEKTIDDVRRSKRRNLSSSDEHSKNCKMTSDLSIVTSQVLEDLGKKEEVKDPIEKQLIAKRVTRSQTKASTTEEVVVDLKRNLSSSNAKSEKDSVNSSVRSQKPKKEAVMKEEEEQDSSEKRITRSKVEEKKNELSNSVARRTSKRLAGIELEPTPELKTRAKVQRIVPLDDEPTPELKTRTKVQRVVPPDDEPTPELKTRTKIQRIVPPDDEPTLELKTRTKVQRILPPDDELTPELKSRTKVQRIVPPDDELTPEFKTRTKVQQRIPPDDGRAGKCKQPVNHVTTSGSKKTEIPLNKEVAQSCNEQSSQKPHAAAATSNNRVSADSAVGIQNIGKAVGRKPSKDKKTLKSPLIVYELNPVFHLDGYKQKEEMSPVSPLSCQTSATKCEKTAAGKRVGRSSPKANLTTSVKPTQISPLRSPNKGKQPHPSDSGSAIQRRNKLANEYSNSSVVRGTCSEVMEKSTNSFSSAFDSTLADLCKDPCIAFAIKTLTGESLCLLNTPAISSNPINNHTKQKGVSFTPETPGNVNTCSEKLVFPSPPPGANIWQDPCIDFAIKTLTGAIPIGLDEPDTKSKSQGMTSTTAATQEAKGRQNNCDYMTNKTVGKPDDLRFTQSFSKD.

Short sequence motifs (nuclear localization signal) lie at residues 13–20 (ERKVEIRV) and 44–51 (IKKLEITN). An MBD domain is found at 29–104 (VIVEKSAAQG…KESDIEDDDS (76 aa)). Disordered regions lie at residues 131 to 157 (IDDVRRSKRRNLSSSDEHSKNCKMTSD), 169 to 283 (LGKK…PTPE), 295 to 328 (PLDDEPTPELKTRTKVQRVVPPDDEPTPELKTRT), 348 to 479 (TKVQ…LKSP), 518 to 562 (TAAG…SGSA), and 696 to 746 (EPDT…FSKD). Residues 169–180 (LGKKEEVKDPIE) show a composition bias toward basic and acidic residues. Residues 190-199 (RSQTKASTTE) show a composition bias toward polar residues. The segment covering 244–260 (SSEKRITRSKVEEKKNE) has biased composition (basic and acidic residues). The short motif at 256–263 (EKKNELSN) is the Nuclear localization signal element. A compositionally biased stretch (polar residues) spans 427 to 451 (VAQSCNEQSSQKPHAAAATSNNRVS). The span at 465 to 476 (VGRKPSKDKKTL) shows a compositional bias: basic residues. 2 stretches are compositionally biased toward polar residues: residues 529–546 (PKANLTTSVKPTQISPLR) and 702–730 (KSQGMTSTTAATQEAKGRQNNCDYMTNKT). Residues 732 to 746 (GKPDDLRFTQSFSKD) show a composition bias toward basic and acidic residues.

The protein resides in the nucleus. In terms of biological role, probable transcriptional regulator. This is Methyl-CpG-binding domain-containing protein 13 (MBD13) from Arabidopsis thaliana (Mouse-ear cress).